Reading from the N-terminus, the 892-residue chain is MAGVNEIRSKYLEFFRAQGHEVVASGPLVPNNDPTLLFTNAGMVPFKNVFTGQETRPYKRAASSQKCVRAGGKHNDLDNVGYTARHHTFFEMLGNFSFGDYYKAEAIEFAWDLITKELALPESRLMVTIYEDDDEAHGLWKKITGLSDDKIVRLGAKSNFWQMGDTGPCGPNSEIFYDHGDKIPGGPPGSPDEDGDRFIEIWNLVFMQYEQHEDGSRTRLPKPSIDTGMGLERIAAVLQGTHDNYSTDLMRSLIVASAEASKSDPDGPHAVSHRVIADHLRSSSFLLADGVMPSNEGRGYVLRRIMRRAMRHAQLVGVAEPLMWRLVPALVRQMGDAYPELRRAEALVTETLRLEETRFRETLTRGLKLLDEEIESLGGKGVLAGEVAFKLYDTYGFPLDLTQDALRSRGMSVDQTGFDEAMAKQRQDARAAWSGSGEKATEAVWFELRDKVGATEFLGYESEIAEGKVVALLVDGQPVDKVEAGTDAALITNQTPFYAESGGQVGDTGIVFSADGAEFPVIDTMKKLGALHVHIGKLARGTLKLGDIVEMKVDKSLRDATRANHSATHLLHEALRRVLGDHVTQKGSMVGPERLRFDFSHPKPMTPEEISEVETIVNRVIRQNAEVTTRLMTPEDAIAAGALALFGEKYGEEVRVLAMGLDDENPNGTYSVELCGGTHVRRVGDIAIFKIVSESAVASGIRRIEALTGEGARAYLVAQDRIAKEAASALRISTEDLPARVVSLMEERKRLERELAQAKKQLAMSGGGGSGGQESPVQEFGGVKLIARKLEGVNPKDLRGLIDESKKQLGSGVVVLVAISEDGKGAIAVGVTDDLTSRYNAVELVKAGAAAMGGKGGGGRPDMAQAGGPEAEKADAALDAVKAAVGELAGAA.

Zn(2+)-binding residues include H565, H569, C675, and H679. Positions 852–871 (MGGKGGGGRPDMAQAGGPEA) are disordered.

It belongs to the class-II aminoacyl-tRNA synthetase family. Zn(2+) is required as a cofactor.

The protein localises to the cytoplasm. The enzyme catalyses tRNA(Ala) + L-alanine + ATP = L-alanyl-tRNA(Ala) + AMP + diphosphate. In terms of biological role, catalyzes the attachment of alanine to tRNA(Ala) in a two-step reaction: alanine is first activated by ATP to form Ala-AMP and then transferred to the acceptor end of tRNA(Ala). Also edits incorrectly charged Ser-tRNA(Ala) and Gly-tRNA(Ala) via its editing domain. This Parvibaculum lavamentivorans (strain DS-1 / DSM 13023 / NCIMB 13966) protein is Alanine--tRNA ligase.